The chain runs to 292 residues: Tricin synthase 2 (292 aa).

The tract at residues 21–46 is disordered; sequence RTTPASRVSSTAMAAANGDASHGANG. Residues 23-32 show a composition bias toward polar residues; the sequence is TPASRVSSTA. S-adenosyl-L-methionine-binding positions include Ser108, Glu130, 132-133, Ser138, Asp156, and Ala185; that span reads GV. Asp208 is a binding site for a divalent metal cation. Position 210 (Asp210) interacts with S-adenosyl-L-methionine. Asp234 and Asn235 together coordinate a divalent metal cation.

Belongs to the class I-like SAM-binding methyltransferase superfamily. Cation-dependent O-methyltransferase family. CCoAMT subfamily. Mg(2+) serves as cofactor. Requires Mn(2+) as cofactor. Expressed in stems only.

It catalyses the reaction tricetin + 2 S-adenosyl-L-methionine = 3',5'-di-O-methyltricetin + 2 S-adenosyl-L-homocysteine + 2 H(+). Its function is as follows. Catalyzes the stepwise methylation of tricetin to its 3'-mono- and 3',5'-dimethyl ethers. No 3',4',5'-trimethylated ester derivatives are produced. Can use caffeoyl CoA, 5-hydroxyferulic acid, luteolin, tricetin, quercetin, myrcetin and 7,8-dihydroxyflavone as substrates, but not naringenin, apigenin or kaempferol. The 2,3-double bond and the O-dihydroxyl group of the substrate are both required for catalytic activity of the enzyme. The chain is Tricin synthase 2 (ROMT-17) from Oryza sativa subsp. japonica (Rice).